Consider the following 514-residue polypeptide: ATP synthase subunit alpha (514 aa).

170-177 (GDRQIGKT) provides a ligand contact to ATP.

Belongs to the ATPase alpha/beta chains family. F-type ATPases have 2 components, CF(1) - the catalytic core - and CF(0) - the membrane proton channel. CF(1) has five subunits: alpha(3), beta(3), gamma(1), delta(1), epsilon(1). CF(0) has three main subunits: a(1), b(2) and c(9-12). The alpha and beta chains form an alternating ring which encloses part of the gamma chain. CF(1) is attached to CF(0) by a central stalk formed by the gamma and epsilon chains, while a peripheral stalk is formed by the delta and b chains.

Its subcellular location is the cell inner membrane. The enzyme catalyses ATP + H2O + 4 H(+)(in) = ADP + phosphate + 5 H(+)(out). Its function is as follows. Produces ATP from ADP in the presence of a proton gradient across the membrane. The alpha chain is a regulatory subunit. This is ATP synthase subunit alpha from Pseudomonas aeruginosa (strain LESB58).